Consider the following 66-residue polypeptide: Large ribosomal subunit protein bL35 (66 aa).

2 stretches are compositionally biased toward basic residues: residues 1–15 (MPKL…KRFK) and 27–40 (AGKR…TKKQ). The disordered stretch occupies residues 1–40 (MPKLKTKSGAKKRFKVTGTGKVMSAHAGKRHGMIKRTKKQ).

The protein belongs to the bacterial ribosomal protein bL35 family.

This Rhodopseudomonas palustris (strain BisA53) protein is Large ribosomal subunit protein bL35.